A 740-amino-acid polypeptide reads, in one-letter code: MLKLFSAFRKNKIWDFNGGIHPPEMKTQSNGTPLRQVPLAQRFVIPLKQHIGAEGELCVSVGDKVLRGQPLTRGRGKMLPVHAPTSGTVTAIAPHSTAHPSALAELSVIIDADGEDCWIPRDGWADYRTRSREELIERIHQFGVAGLGGAGFPTGVKLQGGGDKIETLIINAAECEPYITADDRLMQDCAAQVVEGIRILAHILQPREILIGIEDNKPQAISMLRAVLADSNDISLRVIPTKYPSGGAKQLTYILTGKQVPHGGRSSDIGVLMQNVGTAYAVKRAVIDGEPITERVVTLTGEAIARPGNVWARLGTPVRHLLNDAGFCPSADQMVIMGGPLMGFTLPWLDVPVVKITNCLLAPSANELGEPQEEQSCIRCSACADACPADLLPQQLYWFSKGQQHDKATTHNIADCIECGACAWVCPSNIPLVQYFRQEKAEIAAIRQEEKRAAEAKARFEARQARLEREKAARLERHKSAAVQPAAKDKDAIAAALARVKEKQAQATQPIVIKAGERPDNSAIIAAREARKAQARAKQAELQQTNDAATVADPRKTAVEAAIARAKARKLEQQQANAEPEEQVDPRKAAVEAAIARAKARKLEQQQANAEPEEQVDPRKAAVEAAIARAKARKLEQQQTNAEPEEQVDPRKAAVEAAIARAKARKLEQQQANAEPEEQVDPRKAAVEAAIARAKARKLEQQQTNAEPEEQVDPRKAAVAAAIARAQAKKAAQQKVVNED.

4Fe-4S ferredoxin-type domains follow at residues 369 to 397 (GEPQ…QQLY) and 407 to 436 (KATT…VQYF). [4Fe-4S] cluster-binding residues include cysteine 377, cysteine 380, cysteine 383, cysteine 387, cysteine 416, cysteine 419, cysteine 422, and cysteine 426. Positions 602-718 (KLEQQQANAE…EEQVDPRKAA (117 aa)) are disordered.

The protein belongs to the 4Fe4S bacterial-type ferredoxin family. RnfC subfamily. In terms of assembly, the complex is composed of six subunits: RsxA, RsxB, RsxC, RsxD, RsxE and RsxG. It depends on [4Fe-4S] cluster as a cofactor.

Its subcellular location is the cell inner membrane. Its function is as follows. Part of a membrane-bound complex that couples electron transfer with translocation of ions across the membrane. Required to maintain the reduced state of SoxR. The sequence is that of Ion-translocating oxidoreductase complex subunit C from Shigella sonnei (strain Ss046).